A 168-amino-acid chain; its full sequence is MPRSRTNGNFIDKTFSIVANILLRVIPTTSGEKEAFTYYRDGMSAQSEGNYAEALQNYYEAMRLEIDPYDRSYILYNIGLIHTSNGEHTKALEYYFRALERNPFLPQAFNNMAVICHYRGEQAIQQGDSEIAEAWFDQAAEYWKQAIALTPGNYIEAHNWLKITRRFE.

3 TPR repeats span residues 35–68 (AFTY…EIDP), 72–105 (SYIL…NPFL), and 120–153 (GEQA…TPGN).

This sequence belongs to the Ycf3 family.

The protein localises to the plastid. Its subcellular location is the chloroplast thylakoid membrane. Its function is as follows. Essential for the assembly of the photosystem I (PSI) complex. May act as a chaperone-like factor to guide the assembly of the PSI subunits. The sequence is that of Photosystem I assembly protein Ycf3 from Solanum bulbocastanum (Wild potato).